We begin with the raw amino-acid sequence, 943 residues long: Translation initiation factor IF-2 (943 aa).

Positions 35–359 (MSSIDQDQEA…MPQRKERPLP (325 aa)) are disordered. Low complexity predominate over residues 57-76 (KAPSSQAAKTPAKAAKTSSA). 2 stretches are compositionally biased toward basic and acidic residues: residues 92 to 103 (SNDHADAAEHSQ) and 110 to 124 (AKQE…KTSD). The segment covering 130-141 (SKSTILRPRSTQ) has biased composition (polar residues). Over residues 142-190 (TAHTNTNHNRGGNTASANNTANGRNSNRSNNNNNNRSANNANRSGNNNR) the composition is skewed to low complexity. Composition is skewed to basic and acidic residues over residues 191-205 (SNER…RFDN), 239-250 (ASERQQPKRQEA), and 259-271 (KRSE…RPRT). Composition is skewed to low complexity over residues 289-299 (PAAAAPKPASA) and 315-330 (NFGR…GFNR). Basic residues predominate over residues 331 to 342 (NNRRNKKNKRRQ). Residues 346-358 (PKKEMPQRKERPL) show a composition bias toward basic and acidic residues. The region spanning 444–613 (PRPPVVTIMG…LLEADVLELK (170 aa)) is the tr-type G domain. Residues 453–460 (GHVDHGKT) are G1. Position 453-460 (453-460 (GHVDHGKT)) interacts with GTP. A G2 region spans residues 478 to 482 (GITQH). The segment at 499-502 (DTPG) is G3. Residues 499-503 (DTPGH) and 553-556 (NKID) contribute to the GTP site. Positions 553–556 (NKID) are G4. Positions 589–591 (SAK) are G5.

This sequence belongs to the TRAFAC class translation factor GTPase superfamily. Classic translation factor GTPase family. IF-2 subfamily.

It localises to the cytoplasm. One of the essential components for the initiation of protein synthesis. Protects formylmethionyl-tRNA from spontaneous hydrolysis and promotes its binding to the 30S ribosomal subunits. Also involved in the hydrolysis of GTP during the formation of the 70S ribosomal complex. The polypeptide is Translation initiation factor IF-2 (Lacticaseibacillus paracasei (strain ATCC 334 / BCRC 17002 / CCUG 31169 / CIP 107868 / KCTC 3260 / NRRL B-441) (Lactobacillus paracasei)).